The following is a 564-amino-acid chain: Urocanate hydratase (564 aa).

NAD(+)-binding positions include 58 to 59 (GG), Gln-136, 182 to 184 (GMG), Glu-202, Arg-207, 248 to 249 (NA), 269 to 273 (QTSAH), 279 to 280 (YL), and Tyr-328. The active site involves Cys-416. Position 498 (Gly-498) interacts with NAD(+).

It belongs to the urocanase family. The cofactor is NAD(+).

Its subcellular location is the cytoplasm. It carries out the reaction 4-imidazolone-5-propanoate = trans-urocanate + H2O. Its pathway is amino-acid degradation; L-histidine degradation into L-glutamate; N-formimidoyl-L-glutamate from L-histidine: step 2/3. Catalyzes the conversion of urocanate to 4-imidazolone-5-propionate. This chain is Urocanate hydratase, found in Aliivibrio salmonicida (strain LFI1238) (Vibrio salmonicida (strain LFI1238)).